We begin with the raw amino-acid sequence, 763 residues long: High glucose sensor RGT2 (763 aa).

Positions 1–28 (MNDSQNCLRQREENSHLNPGNDFGHHQG) are disordered. The Cytoplasmic segment spans residues 1–99 (MNDSQNCLRQ…PLPLRSNVMS (99 aa)). The chain crosses the membrane as a helical span at residues 100–120 (VLVGIFVAVGGFLFGYDTGLI). Residues 121-144 (NSITDMPYVKTYIAPNHSYFTTSQ) lie on the Extracellular side of the membrane. N136 carries an N-linked (GlcNAc...) asparagine glycan. A helical transmembrane segment spans residues 145–165 (IAILVSFLSLGTFFGALIAPY). The Cytoplasmic portion of the chain corresponds to 166–175 (ISDSYGRKPT). The chain crosses the membrane as a helical span at residues 176–196 (IMFSTAVIFSIGNSLQVASGG). Position 197 (L197) is a topological domain, extracellular. Residues 198 to 218 (VLLIVGRVISGIGIGIISAVV) traverse the membrane as a helical segment. Over 219–231 (PLYQAEAAQKNLR) the chain is Cytoplasmic. Residues 232–252 (GAIISSYQWAITIGLLVSSAV) traverse the membrane as a helical segment. Topologically, residues 253 to 266 (SQGTHSKNGPSSYR) are extracellular. A helical transmembrane segment spans residues 267 to 287 (IPIGLQYVWSSILAVGMIFLP). The Cytoplasmic segment spans residues 288-357 (ESPRYYVLKD…SENRPKQILR (70 aa)). A helical transmembrane segment spans residues 358–378 (IFTGIAIQAFQQASGINFIFY). Over 379–393 (YGVNFFNNTGVDNSY) the chain is Extracellular. Residue N385 is glycosylated (N-linked (GlcNAc...) asparagine). The chain crosses the membrane as a helical span at residues 394–414 (LVSFISYAVNVAFSIPGMYLV). Topologically, residues 415-421 (DRIGRRP) are cytoplasmic. Residues 422 to 442 (VLLAGGVIMAIANLVIAIVGV) traverse the membrane as a helical segment. Topologically, residues 443-452 (SEGKTVVASK) are extracellular. Residues 453–473 (IMIAFICLFIAAFSATWGGVV) traverse the membrane as a helical segment. Topologically, residues 474-491 (WVVSAELYPLGVRSKCTA) are cytoplasmic. The chain crosses the membrane as a helical span at residues 492-512 (ICAAANWLVNFTCALITPYIV). The Extracellular portion of the chain corresponds to 513 to 524 (DVGSHTSSMGPK). A helical membrane pass occupies residues 525–545 (IFFIWGGLNVVAVIVVYFAVY). The Cytoplasmic portion of the chain corresponds to 546 to 763 (ETRGLTLEEI…SKHSQYTSPQ (218 aa)). Positions 725–737 (SSTTSNDTSFSPS) are enriched in low complexity. The interval 725 to 763 (SSTTSNDTSFSPSHNSNARTSSNWTSDLASKHSQYTSPQ) is disordered. Polar residues predominate over residues 738–763 (HNSNARTSSNWTSDLASKHSQYTSPQ).

It belongs to the major facilitator superfamily. Sugar transporter (TC 2.A.1.1) family. As to quaternary structure, interacts with YCK1. Interacts with MTH1 and STD1. Post-translationally, phosphorylated in the C-terminal tail on Yck consensus sites in a yeast casein kinases YCK1 and YCK2 (Yck)-dependent manner. This phosphorylation is required for interaction with HXT corepressors MTH1 and STD1 and ultimately HXT expression.

It is found in the cell membrane. Low-affinity high glucose sensor that is part of the sensor/receptor-repressor (SSR) glucose-signaling pathway, which detects extracellular glucose and induces expression of glucose transporters that bring glucose into the cell. The transporter-like sensor generates an intracellular signal in the presence of high levels of glucose to promote high glucose-induced expression of HXT1. Binding of glucose to the RGT2 transmembrane domain activates a downstream signaling cascade, leading to phosphorylation of the RGT1 corepressors MTH1 and STD1, targeting them for SCF(Grr1)-dependent ubiquitination and degradation. Depletion of the corepressors robs RGT1 of its ability to repress expression of HXT genes, leading to accumulation of glucose transporters in the plasma membrane. Even though RGT2 is similar to glucose transporters, it appears to be unable to transport glucose. This is High glucose sensor RGT2 from Saccharomyces cerevisiae (strain ATCC 204508 / S288c) (Baker's yeast).